A 64-amino-acid polypeptide reads, in one-letter code: Prokaryotic ubiquitin-like protein Pup (64 aa).

2 stretches are compositionally biased toward basic and acidic residues: residues Met-1 to Gly-11 and Gly-25 to Glu-34. A disordered region spans residues Met-1–Asp-38. Residues Pro-21–Tyr-58 form an ARC ATPase binding region. Residues Ala-24–Glu-52 are a coiled coil. Gln-64 carries the post-translational modification Deamidated glutamine. Gln-64 is covalently cross-linked (Isoglutamyl lysine isopeptide (Gln-Lys) (interchain with K-? in acceptor proteins)).

The protein belongs to the prokaryotic ubiquitin-like protein family. As to quaternary structure, strongly interacts with the proteasome-associated ATPase ARC through a hydrophobic interface; the interacting region of Pup lies in its C-terminal half. There is one Pup binding site per ARC hexamer ring. Post-translationally, is modified by deamidation of its C-terminal glutamine to glutamate by the deamidase Dop, a prerequisite to the subsequent pupylation process.

The protein operates within protein degradation; proteasomal Pup-dependent pathway. Its function is as follows. Protein modifier that is covalently attached to lysine residues of substrate proteins, thereby targeting them for proteasomal degradation. The tagging system is termed pupylation. The polypeptide is Prokaryotic ubiquitin-like protein Pup (Nocardia farcinica (strain IFM 10152)).